A 228-amino-acid polypeptide reads, in one-letter code: Outer membrane protein assembly factor BamE (228 aa).

The signal sequence occupies residues 1-29; it reads MNPILKGVYSPARLGVVALTLFGILGVTG. The N-palmitoyl cysteine moiety is linked to residue Cys30. A lipid anchor (S-diacylglycerol cysteine) is attached at Cys30. The interval 197-228 is disordered; sequence DFFGSSKKDPDPQSPQLGPGTLNDVPKPADSK.

It belongs to the BamE family. As to quaternary structure, part of the Bam complex.

It is found in the cell outer membrane. Functionally, part of the outer membrane protein assembly complex, which is involved in assembly and insertion of beta-barrel proteins into the outer membrane. The protein is Outer membrane protein assembly factor BamE of Polynucleobacter necessarius subsp. necessarius (strain STIR1).